A 426-amino-acid polypeptide reads, in one-letter code: Glutamate-1-semialdehyde 2,1-aminomutase (426 aa).

The residue at position 265 (K265) is an N6-(pyridoxal phosphate)lysine.

It belongs to the class-III pyridoxal-phosphate-dependent aminotransferase family. HemL subfamily. Homodimer. The cofactor is pyridoxal 5'-phosphate.

Its subcellular location is the cytoplasm. It catalyses the reaction (S)-4-amino-5-oxopentanoate = 5-aminolevulinate. Its pathway is porphyrin-containing compound metabolism; protoporphyrin-IX biosynthesis; 5-aminolevulinate from L-glutamyl-tRNA(Glu): step 2/2. The chain is Glutamate-1-semialdehyde 2,1-aminomutase from Halorhodospira halophila (strain DSM 244 / SL1) (Ectothiorhodospira halophila (strain DSM 244 / SL1)).